A 433-amino-acid chain; its full sequence is Apolipoprotein L5 (433 aa).

A disordered region spans residues 346 to 433 (HHRHLPQKAS…GRQAPGRHRQ (88 aa)). Residues 359-371 (SSSRGRAVRGSRV) show a composition bias toward low complexity. Positions 422 to 433 (RKGRQAPGRHRQ) are enriched in basic residues.

This sequence belongs to the apolipoprotein L family. Low level of expression; detected in uterus, testis, skeletal muscle and stomach.

It is found in the cytoplasm. May affect the movement of lipids in the cytoplasm or allow the binding of lipids to organelles. The sequence is that of Apolipoprotein L5 (APOL5) from Homo sapiens (Human).